The following is a 455-amino-acid chain: 1,4-beta-D-glucan cellobiohydrolase C (455 aa).

A signal peptide spans 1–19; the sequence is MHYSASGLALAFLLPAIQA. Residues 20-55 form the CBM1 domain; sequence QQTLYGQCGGSGWTGATSCVAGAACSTLNQWYAQCL. 2 disulfide bridges follow: cysteine 27–cysteine 44 and cysteine 38–cysteine 54. Residues 59-92 form a thr-rich linker region; it reads TTTSTTLTTTTSSVTTTSNPGSTTTTSSVTVTAT. A disordered region spans residues 66 to 86; it reads TTTTSSVTTTSNPGSTTTTSS. Positions 93-450 are catalytic; that stretch reads ASGNPFSGYQ…QAYFVQLLQN (358 aa). Residue aspartate 185 is part of the active site. 2 cysteine pairs are disulfide-bonded: cysteine 186–cysteine 245 and cysteine 377–cysteine 424. Catalysis depends on aspartate 231, which acts as the Proton donor. Catalysis depends on aspartate 410, which acts as the Nucleophile.

It belongs to the glycosyl hydrolase 6 (cellulase B) family.

It localises to the secreted. The enzyme catalyses Hydrolysis of (1-&gt;4)-beta-D-glucosidic linkages in cellulose and cellotetraose, releasing cellobiose from the non-reducing ends of the chains.. Its function is as follows. The biological conversion of cellulose to glucose generally requires three types of hydrolytic enzymes: (1) Endoglucanases which cut internal beta-1,4-glucosidic bonds; (2) Exocellobiohydrolases that cut the disaccharide cellobiose from the non-reducing end of the cellulose polymer chain; (3) Beta-1,4-glucosidases which hydrolyze the cellobiose and other short cello-oligosaccharides to glucose. Active against carboxymethylcellulose, beta-glucan and lichenan. The chain is 1,4-beta-D-glucan cellobiohydrolase C (cbhC) from Emericella nidulans (strain FGSC A4 / ATCC 38163 / CBS 112.46 / NRRL 194 / M139) (Aspergillus nidulans).